The sequence spans 227 residues: Phosphoglycolate phosphatase (227 aa).

Aspartate 14 acts as the Nucleophile in catalysis. Mg(2+) is bound by residues aspartate 14, aspartate 16, and aspartate 177.

This sequence belongs to the HAD-like hydrolase superfamily. CbbY/CbbZ/Gph/YieH family. It depends on Mg(2+) as a cofactor.

The enzyme catalyses 2-phosphoglycolate + H2O = glycolate + phosphate. The protein operates within organic acid metabolism; glycolate biosynthesis; glycolate from 2-phosphoglycolate: step 1/1. Its function is as follows. Specifically catalyzes the dephosphorylation of 2-phosphoglycolate. Is involved in the dissimilation of the intracellular 2-phosphoglycolate formed during the DNA repair of 3'-phosphoglycolate ends, a major class of DNA lesions induced by oxidative stress. In Thiobacillus denitrificans (strain ATCC 25259 / T1), this protein is Phosphoglycolate phosphatase.